The primary structure comprises 198 residues: Holliday junction resolvase RecU (198 aa).

Positions 1-22 are disordered; it reads MVNYPHKVSSQKRQTSLSQPKN. The segment covering 11–22 has biased composition (polar residues); sequence QKRQTSLSQPKN. Positions 81, 83, 96, and 115 each coordinate Mg(2+).

Belongs to the RecU family. It depends on Mg(2+) as a cofactor.

It is found in the cytoplasm. It carries out the reaction Endonucleolytic cleavage at a junction such as a reciprocal single-stranded crossover between two homologous DNA duplexes (Holliday junction).. Endonuclease that resolves Holliday junction intermediates in genetic recombination. Cleaves mobile four-strand junctions by introducing symmetrical nicks in paired strands. Promotes annealing of linear ssDNA with homologous dsDNA. Required for DNA repair, homologous recombination and chromosome segregation. This is Holliday junction resolvase RecU from Streptococcus pneumoniae serotype 2 (strain D39 / NCTC 7466).